The sequence spans 329 residues: DNA-directed RNA polymerase subunit alpha (329 aa).

An alpha N-terminal domain (alpha-NTD) region spans residues Met-1 to Arg-235. The alpha C-terminal domain (alpha-CTD) stretch occupies residues Phe-249–Glu-329.

It belongs to the RNA polymerase alpha chain family. Homodimer. The RNAP catalytic core consists of 2 alpha, 1 beta, 1 beta' and 1 omega subunit. When a sigma factor is associated with the core the holoenzyme is formed, which can initiate transcription.

The enzyme catalyses RNA(n) + a ribonucleoside 5'-triphosphate = RNA(n+1) + diphosphate. Functionally, DNA-dependent RNA polymerase catalyzes the transcription of DNA into RNA using the four ribonucleoside triphosphates as substrates. In Cronobacter sakazakii (strain ATCC BAA-894) (Enterobacter sakazakii), this protein is DNA-directed RNA polymerase subunit alpha.